We begin with the raw amino-acid sequence, 40 residues long: Serine proteinase-like BMK-CBP (40 aa).

One can recognise a Peptidase S1 domain in the interval 1-40; that stretch reads IFGGTFAKNGEYPWMVVIDLPEFACGGVLISKKFVLTAAH. His40 functions as the Charge relay system in the catalytic mechanism.

Belongs to the peptidase S1 family. As to expression, expressed by the venom gland.

The protein localises to the secreted. In terms of biological role, binds in a dose-dependent manner to the breast cancer cell line MCF-7. The polypeptide is Serine proteinase-like BMK-CBP (Olivierus martensii (Manchurian scorpion)).